Consider the following 84-residue polypeptide: MSSGGLLLLLGLLTLCAELTPVSSQIRPAFCYEDPPFFQKCGAFVDSYYFNRSRITCVHFFYGQCDVNQNHFTTMSECNRVCHG.

Residues 1–24 (MSSGGLLLLLGLLTLCAELTPVSS) form the signal peptide. Q25 carries the post-translational modification Pyrrolidone carboxylic acid. The region spanning 31 to 82 (CYEDPPFFQKCGAFVDSYYFNRSRITCVHFFYGQCDVNQNHFTTMSECNRVC) is the BPTI/Kunitz inhibitor domain. Intrachain disulfides connect C31-C82, C41-C65, and C57-C78.

It belongs to the venom Kunitz-type family. As to quaternary structure, heterodimer of an alpha (Kunitz-type) and a beta (phospholipase A2 homolog) chains; non-covalently-linked. In terms of tissue distribution, expressed by the venom gland.

The protein localises to the secreted. Its function is as follows. MitTx, a heteromeric complex between Kunitz- and phospholipase-A2-like proteins, potently, persistently and selectively activates rat and chicken acid-sensing ion channel ASIC1. Both alternatively spliced rat isoforms ASIC1a and ASIC1b are activated, with a higher potency for ASIC1a (EC(50)=9.4 nM) vs ASIC1b (EC(50)=23 nM). The rat ASIC3 subtype is also sensitive to the heterodimer, but with a lower potency (EC(50)=830 nM). On rat ASIC2a, the toxin shows a very weak activation, but produces a remarkable potentiation (&gt;100-fold) of protons when the extracellular pH drops below neutrality. Moderate and weak activations are also observed on the heterotrimers Asic1a-Asic2a and Asic1a-Asic3 (expressed in CHO cells), respectively. The binding sites of the beta subunit of MitTx and the spider psalmotoxin-1 overlap, explaining why these toxins are mutually exclusive. In vivo, the heterodimer elicits robust pain-related behavior in mice by activation of ASIC1 channels on capsaicin-sensitive nerve fibers. This Micrurus tener tener (Texas coral snake) protein is Kunitz-type neurotoxin MitTx-alpha.